Here is a 668-residue protein sequence, read N- to C-terminus: Metal reductase (668 aa).

FMN-binding positions include Pro-23–His-25, Gly-57, Gln-98, Arg-216, Arg-290, and Ala-312–Arg-313. Residues Cys-336 and Cys-339 each coordinate [4Fe-4S] cluster. Gln-341 contributes to the FAD binding site. [4Fe-4S] cluster is bound by residues Cys-343 and Cys-355. FAD contacts are provided by Ala-386, Glu-405, Gln-413, Arg-423, and Ala-450.

The protein in the N-terminal section; belongs to the NADH:flavin oxidoreductase/NADH oxidase family. In terms of assembly, homotetramer. The cofactor is FMN. FAD serves as cofactor. [4Fe-4S] cluster is required as a cofactor.

Its subcellular location is the cytoplasm. Its function is as follows. Metal reductase able to reduce Fe(III)-chelates to Fe(II)-chelates, as well as soluble Cr(VI) and U(VI), using NADH as electron donor. Cannot use NADPH as an electron donor. Is unable to reduce riboflavin and FMN with NADH as electron donor. May have an in vivo role in metal reduction in D.reducens, which is an organism capable of reducing contaminant heavy metals and radionuclides. This Desulforamulus reducens (strain ATCC BAA-1160 / DSM 100696 / MI-1) (Desulfotomaculum reducens) protein is Metal reductase.